The primary structure comprises 143 residues: Aspartate 1-decarboxylase (143 aa).

Catalysis depends on serine 25, which acts as the Schiff-base intermediate with substrate; via pyruvic acid. Serine 25 carries the pyruvic acid (Ser) modification. Threonine 57 is a binding site for substrate. Residue tyrosine 58 is the Proton donor of the active site. 73 to 75 lines the substrate pocket; it reads GAA.

Belongs to the PanD family. Heterooctamer of four alpha and four beta subunits. The cofactor is pyruvate. Post-translationally, is synthesized initially as an inactive proenzyme, which is activated by self-cleavage at a specific serine bond to produce a beta-subunit with a hydroxyl group at its C-terminus and an alpha-subunit with a pyruvoyl group at its N-terminus.

Its subcellular location is the cytoplasm. The catalysed reaction is L-aspartate + H(+) = beta-alanine + CO2. It participates in cofactor biosynthesis; (R)-pantothenate biosynthesis; beta-alanine from L-aspartate: step 1/1. Functionally, catalyzes the pyruvoyl-dependent decarboxylation of aspartate to produce beta-alanine. In Mycobacterium ulcerans (strain Agy99), this protein is Aspartate 1-decarboxylase.